The primary structure comprises 296 residues: Formamidopyrimidine-DNA glycosylase (296 aa).

Pro-2 functions as the Schiff-base intermediate with DNA in the catalytic mechanism. Glu-3 acts as the Proton donor in catalysis. The active-site Proton donor; for beta-elimination activity is Lys-58. His-104, Arg-126, and Lys-169 together coordinate DNA. The FPG-type zinc-finger motif lies at Ser-260–Lys-296. Residue Arg-286 is the Proton donor; for delta-elimination activity of the active site.

The protein belongs to the FPG family. Monomer. Zn(2+) serves as cofactor.

The enzyme catalyses Hydrolysis of DNA containing ring-opened 7-methylguanine residues, releasing 2,6-diamino-4-hydroxy-5-(N-methyl)formamidopyrimidine.. It catalyses the reaction 2'-deoxyribonucleotide-(2'-deoxyribose 5'-phosphate)-2'-deoxyribonucleotide-DNA = a 3'-end 2'-deoxyribonucleotide-(2,3-dehydro-2,3-deoxyribose 5'-phosphate)-DNA + a 5'-end 5'-phospho-2'-deoxyribonucleoside-DNA + H(+). Its function is as follows. Involved in base excision repair of DNA damaged by oxidation or by mutagenic agents. Acts as a DNA glycosylase that recognizes and removes damaged bases. Has a preference for oxidized purines, such as 7,8-dihydro-8-oxoguanine (8-oxoG). Has AP (apurinic/apyrimidinic) lyase activity and introduces nicks in the DNA strand. Cleaves the DNA backbone by beta-delta elimination to generate a single-strand break at the site of the removed base with both 3'- and 5'-phosphates. The polypeptide is Formamidopyrimidine-DNA glycosylase (Rhizobium etli (strain ATCC 51251 / DSM 11541 / JCM 21823 / NBRC 15573 / CFN 42)).